The chain runs to 391 residues: Formate-dependent phosphoribosylglycinamide formyltransferase (391 aa).

Residues 18–19 (EL) and Glu-78 each bind N(1)-(5-phospho-beta-D-ribosyl)glycinamide. Residues Arg-110, Lys-151, 156–161 (SSGKGQ), 191–194 (EEFI), and Glu-199 contribute to the ATP site. The ATP-grasp domain occupies 115–305 (DLASKDLKIK…EFELHLRAFL (191 aa)). 2 residues coordinate Mg(2+): Glu-264 and Glu-276. N(1)-(5-phospho-beta-D-ribosyl)glycinamide contacts are provided by residues Asp-283, Lys-353, and 360-361 (RR).

It belongs to the PurK/PurT family. Homodimer.

It carries out the reaction N(1)-(5-phospho-beta-D-ribosyl)glycinamide + formate + ATP = N(2)-formyl-N(1)-(5-phospho-beta-D-ribosyl)glycinamide + ADP + phosphate + H(+). The protein operates within purine metabolism; IMP biosynthesis via de novo pathway; N(2)-formyl-N(1)-(5-phospho-D-ribosyl)glycinamide from N(1)-(5-phospho-D-ribosyl)glycinamide (formate route): step 1/1. Involved in the de novo purine biosynthesis. Catalyzes the transfer of formate to 5-phospho-ribosyl-glycinamide (GAR), producing 5-phospho-ribosyl-N-formylglycinamide (FGAR). Formate is provided by PurU via hydrolysis of 10-formyl-tetrahydrofolate. This Prochlorococcus marinus (strain MIT 9301) protein is Formate-dependent phosphoribosylglycinamide formyltransferase.